Reading from the N-terminus, the 141-residue chain is Lutropin subunit beta (141 aa).

A signal peptide spans 1–20 (MEMLQGLLLWLLLSVGGVWA). Disulfide bonds link cysteine 29-cysteine 77, cysteine 43-cysteine 92, cysteine 46-cysteine 130, cysteine 54-cysteine 108, cysteine 58-cysteine 110, and cysteine 113-cysteine 120. N-linked (GlcNAc...) asparagine glycosylation occurs at asparagine 33.

It belongs to the glycoprotein hormones subunit beta family. As to quaternary structure, heterodimer of a common alpha chain and a unique beta chain which confers biological specificity to thyrotropin, lutropin, follitropin and gonadotropin.

The protein resides in the secreted. Functionally, promotes spermatogenesis and ovulation by stimulating the testes and ovaries to synthesize steroids. This chain is Lutropin subunit beta (LHB1), found in Ceratotherium simum (White rhinoceros).